The following is a 578-amino-acid chain: V-type ATP synthase alpha chain (578 aa).

Residue 228–235 (GPFGSGKT) coordinates ATP.

It belongs to the ATPase alpha/beta chains family.

It catalyses the reaction ATP + H2O + 4 H(+)(in) = ADP + phosphate + 5 H(+)(out). In terms of biological role, produces ATP from ADP in the presence of a proton gradient across the membrane. The V-type alpha chain is a catalytic subunit. This is V-type ATP synthase alpha chain from Thermus thermophilus (strain ATCC BAA-163 / DSM 7039 / HB27).